The following is a 369-amino-acid chain: Dof zinc finger protein DOF2.5 (369 aa).

Residues 80 to 134 form a Dof-type zinc finger; the sequence is LNCPRCNSTNTKFCYYNNYSLTQPRYFCKGCRRYWTEGGSLRNVPVGGSSRKNKR. Zn(2+) is bound by residues Cys-82, Cys-85, Cys-107, and Cys-110. Disordered stretches follow at residues 120–149, 203–224, 284–304, and 322–369; these read LRNVPVGGSSRKNKRSSSSSSSNILQTIPS, EGNGNITHQQQPSSSSSVYGSS, TDHQGLGHNSNNRSEALHSDH, and SSSI…GSSW. Positions 214–224 are enriched in low complexity; the sequence is PSSSSSVYGSS. The segment covering 284-297 has biased composition (polar residues); it reads TDHQGLGHNSNNRS. Residues 342–362 show a composition bias toward low complexity; it reads NNNNNNNSSPNNGYWSGMFST.

As to expression, expressed in the vascular system of the mother plant, but not present in the seed and embryo. In maturing siliques, found all through the funiculus connecting the placenta to the ovule, but not in the ovule.

It is found in the nucleus. Transcription factor specifically involved in the maternal control of seed germination. Regulates transcription by binding to a 5'-AA[AG]G-3' consensus core sequence. May ensure the activation of a component that would trigger germination as a consequence of red light perception. In Arabidopsis thaliana (Mouse-ear cress), this protein is Dof zinc finger protein DOF2.5 (DOF2.5).